Reading from the N-terminus, the 315-residue chain is Aspartate carbamoyltransferase catalytic subunit (315 aa).

Carbamoyl phosphate is bound by residues arginine 64 and threonine 65. Lysine 92 contacts L-aspartate. Arginine 114, histidine 142, and glutamine 145 together coordinate carbamoyl phosphate. Residues arginine 176 and arginine 230 each coordinate L-aspartate. Positions 271 and 272 each coordinate carbamoyl phosphate.

The protein belongs to the aspartate/ornithine carbamoyltransferase superfamily. ATCase family. In terms of assembly, heterododecamer (2C3:3R2) of six catalytic PyrB chains organized as two trimers (C3), and six regulatory PyrI chains organized as three dimers (R2).

The catalysed reaction is carbamoyl phosphate + L-aspartate = N-carbamoyl-L-aspartate + phosphate + H(+). The protein operates within pyrimidine metabolism; UMP biosynthesis via de novo pathway; (S)-dihydroorotate from bicarbonate: step 2/3. Its function is as follows. Catalyzes the condensation of carbamoyl phosphate and aspartate to form carbamoyl aspartate and inorganic phosphate, the committed step in the de novo pyrimidine nucleotide biosynthesis pathway. The protein is Aspartate carbamoyltransferase catalytic subunit of Lawsonia intracellularis (strain PHE/MN1-00).